Reading from the N-terminus, the 313-residue chain is LUC7-related splicing factor homolog (313 aa).

The disordered stretch occupies residues Arg-237–Tyr-313.

Belongs to the Luc7 family.

The polypeptide is LUC7-related splicing factor homolog (Caenorhabditis elegans).